We begin with the raw amino-acid sequence, 139 residues long: Small ribosomal subunit protein uS12 (139 aa).

The interval 119–139 is disordered; the sequence is GVDKRRQQRSAYGAKKPKPKS.

This sequence belongs to the universal ribosomal protein uS12 family. As to quaternary structure, part of the 30S ribosomal subunit. Contacts proteins S8 and S17. May interact with IF1 in the 30S initiation complex.

With S4 and S5 plays an important role in translational accuracy. Its function is as follows. Interacts with and stabilizes bases of the 16S rRNA that are involved in tRNA selection in the A site and with the mRNA backbone. Located at the interface of the 30S and 50S subunits, it traverses the body of the 30S subunit contacting proteins on the other side and probably holding the rRNA structure together. The combined cluster of proteins S8, S12 and S17 appears to hold together the shoulder and platform of the 30S subunit. In Mycoplasma genitalium (strain ATCC 33530 / DSM 19775 / NCTC 10195 / G37) (Mycoplasmoides genitalium), this protein is Small ribosomal subunit protein uS12.